A 295-amino-acid chain; its full sequence is 3-hydroxy-5-phosphonooxypentane-2,4-dione thiolase (295 aa).

The active-site Schiff-base intermediate with substrate is K203.

The protein belongs to the DeoC/FbaB aldolase family. As to quaternary structure, homodecamer.

It localises to the cytoplasm. The catalysed reaction is dihydroxyacetone phosphate + acetyl-CoA = 3-hydroxy-2,4-dioxopentyl phosphate + CoA. Involved in the degradation of phospho-AI-2, thereby terminating induction of the lsr operon and closing the AI-2 signaling cycle. Catalyzes the transfer of an acetyl moiety from 3-hydroxy-5-phosphonooxypentane-2,4-dione to CoA to form glycerone phosphate and acetyl-CoA. This is 3-hydroxy-5-phosphonooxypentane-2,4-dione thiolase from Klebsiella pneumoniae subsp. pneumoniae (strain ATCC 700721 / MGH 78578).